Here is a 100-residue protein sequence, read N- to C-terminus: Urease subunit gamma (100 aa).

Belongs to the urease gamma subunit family. Heterotrimer of UreA (gamma), UreB (beta) and UreC (alpha) subunits. Three heterotrimers associate to form the active enzyme.

The protein localises to the cytoplasm. It carries out the reaction urea + 2 H2O + H(+) = hydrogencarbonate + 2 NH4(+). The protein operates within nitrogen metabolism; urea degradation; CO(2) and NH(3) from urea (urease route): step 1/1. The protein is Urease subunit gamma of Teredinibacter turnerae (strain ATCC 39867 / T7901).